A 192-amino-acid polypeptide reads, in one-letter code: GTP cyclohydrolase-2 (192 aa).

50-54 (RLHSE) is a binding site for GTP. 3 residues coordinate Zn(2+): Cys-55, Cys-66, and Cys-68. Residues 92 to 94 (EGR) and Thr-114 each bind GTP. Residue Asp-126 is the Proton acceptor of the active site. Residue Arg-128 is the Nucleophile of the active site. The GTP site is built by Thr-149 and Lys-154.

Belongs to the GTP cyclohydrolase II family. Zn(2+) is required as a cofactor.

It carries out the reaction GTP + 4 H2O = 2,5-diamino-6-hydroxy-4-(5-phosphoribosylamino)-pyrimidine + formate + 2 phosphate + 3 H(+). It functions in the pathway cofactor biosynthesis; riboflavin biosynthesis; 5-amino-6-(D-ribitylamino)uracil from GTP: step 1/4. In terms of biological role, catalyzes the conversion of GTP to 2,5-diamino-6-ribosylamino-4(3H)-pyrimidinone 5'-phosphate (DARP), formate and pyrophosphate. The sequence is that of GTP cyclohydrolase-2 from Helicobacter acinonychis (strain Sheeba).